The sequence spans 137 residues: Large ribosomal subunit protein uL16 (137 aa).

This sequence belongs to the universal ribosomal protein uL16 family. Part of the 50S ribosomal subunit.

In terms of biological role, binds 23S rRNA and is also seen to make contacts with the A and possibly P site tRNAs. The chain is Large ribosomal subunit protein uL16 from Xanthomonas axonopodis pv. citri (strain 306).